The following is a 289-amino-acid chain: ATP synthase gamma chain (289 aa).

Belongs to the ATPase gamma chain family. F-type ATPases have 2 components, CF(1) - the catalytic core - and CF(0) - the membrane proton channel. CF(1) has five subunits: alpha(3), beta(3), gamma(1), delta(1), epsilon(1). CF(0) has three main subunits: a, b and c.

Its subcellular location is the cell inner membrane. Produces ATP from ADP in the presence of a proton gradient across the membrane. The gamma chain is believed to be important in regulating ATPase activity and the flow of protons through the CF(0) complex. This Acinetobacter baumannii (strain AB307-0294) protein is ATP synthase gamma chain.